The primary structure comprises 306 residues: Glutaminase (306 aa).

Residues serine 61, asparagine 111, glutamate 155, asparagine 162, tyrosine 186, tyrosine 238, and valine 256 each coordinate substrate.

Belongs to the glutaminase family. Homotetramer.

The catalysed reaction is L-glutamine + H2O = L-glutamate + NH4(+). The chain is Glutaminase from Pseudomonas entomophila (strain L48).